The sequence spans 872 residues: Rho guanine nucleotide exchange factor scd1 (872 aa).

A disordered region spans residues 1–29 (MAYFQDRKTSSRSLPSYINHSTQNLVGPR). Over residues 11–25 (SRSLPSYINHSTQNL) the composition is skewed to polar residues. The Calponin-homology (CH) domain occupies 82-198 (DSIHREALNS…TIELLLKKYE (117 aa)). A DH domain is found at 228–402 (SGRRVTAELY…VRVANQVNET (175 aa)). Residues 426–547 (SLQYFGQLLV…WMSVLNRLLW (122 aa)) form the PH domain. 2 disordered regions span residues 553 to 667 (SPKD…STAS) and 743 to 765 (MKSDGSLLPSTKHTSLSSSSTST). The segment covering 560–584 (AASTPANPVYNRSSSQTSKGYNSSD) has biased composition (polar residues). Phosphoserine is present on serine 583. Residues 599–616 (SPTSISSPSSKSSPFTKT) show a composition bias toward low complexity. Basic and acidic residues predominate over residues 617–633 (TSKDTKSATTTDERPSD). Composition is skewed to low complexity over residues 645–667 (TSSLRTSQTTSTIVSNDSSSTAS) and 748–765 (SLLPSTKHTSLSSSSTST). The region spanning 772 to 859 (TTNVKIRLRL…FELMDPVHNK (88 aa)) is the PB1 domain.

In terms of assembly, scd1, scd2, cdc42, and ras1, in its GTP-bound state, act cooperatively to form a protein complex. Interacts with moe1 and cdc42.

Its subcellular location is the nucleus. It is found in the cytoplasm. In terms of biological role, required for mating and morphogenesis. May contain a cryptic binding site for cdc42 that is enhanced by binding Ras. Interacts directly with scd2. Promotes the exchange of cdc42-bound GDP by GTP. Involved in septation and stimulates the elongation of conjugation tubes. The chain is Rho guanine nucleotide exchange factor scd1 (scd1) from Schizosaccharomyces pombe (strain 972 / ATCC 24843) (Fission yeast).